We begin with the raw amino-acid sequence, 87 residues long: Retinal rod rhodopsin-sensitive cGMP 3',5'-cyclic phosphodiesterase subunit gamma (87 aa).

Met-1 is modified (N-acetylmethionine). Residues 16 to 54 (VVGGPVTPRKGPPKFKQRQTRQFKSKPPKKGVQGFGDDI) form a disordered region. A compositionally biased stretch (basic residues) spans 26–44 (GPPKFKQRQTRQFKSKPPK).

The protein belongs to the rod/cone cGMP-PDE gamma subunit family. In terms of assembly, oligomer composed of two catalytic chains (alpha and beta), an inhibitory chain (gamma) and the delta chain.

It catalyses the reaction 3',5'-cyclic GMP + H2O = GMP + H(+). Participates in processes of transmission and amplification of the visual signal. cGMP-PDEs are the effector molecules in G-protein-mediated phototransduction in vertebrate rods and cones. The chain is Retinal rod rhodopsin-sensitive cGMP 3',5'-cyclic phosphodiesterase subunit gamma (PDE6G) from Cavia porcellus (Guinea pig).